Consider the following 561-residue polypeptide: Putative transport protein YbjL (561 aa).

The next 5 helical transmembrane spans lie at 8-28 (LLNG…LCLG), 32-52 (LGSI…LLGQ), 66-86 (FMLF…SIFF), 94-114 (MLAL…GKLF), and 158-178 (NLSL…IVGA). RCK C-terminal domains lie at 200-288 (RGLD…SFRN) and 292-373 (VFDR…RIGF). 5 helical membrane passes run 383–403 (LLAF…TFQF), 406–426 (FSFG…LGFM), 451–471 (VFMA…LGAI), 475–495 (MLIA…LFGA), and 540–560 (AIAN…WPGL).

It belongs to the AAE transporter (TC 2.A.81) family. YbjL subfamily.

It localises to the cell membrane. In Shigella boydii serotype 4 (strain Sb227), this protein is Putative transport protein YbjL.